A 148-amino-acid chain; its full sequence is Putative carbonic anhydrase (148 aa).

The Alpha-carbonic anhydrase domain maps to 1–146 (CLKRLQPGEM…LNGRTVFEVH (146 aa)).

It belongs to the alpha-carbonic anhydrase family. It depends on Zn(2+) as a cofactor. In terms of tissue distribution, component of the acid-insoluble organic matrix of the aragonitic skeleton (at protein level).

Its subcellular location is the secreted. It carries out the reaction hydrogencarbonate + H(+) = CO2 + H2O. Functionally, reversible hydration of carbon dioxide. The chain is Putative carbonic anhydrase from Acropora millepora (Staghorn coral).